A 142-amino-acid polypeptide reads, in one-letter code: Ribonuclease VapC25 (142 aa).

The PINc domain occupies 3–139 (LIDVNVLLAA…ARFASVRHIR (137 aa)). Mg(2+) is bound by residues Asp-5 and Asp-108.

This sequence belongs to the PINc/VapC protein family. Mg(2+) is required as a cofactor.

Functionally, toxic component of a type II toxin-antitoxin (TA) system. An RNase. Upon expression in M.smegmatis inhibits colony formation. Its toxic effect is neutralized by coexpression with cognate antitoxin VapB25. The sequence is that of Ribonuclease VapC25 from Mycobacterium tuberculosis (strain ATCC 25618 / H37Rv).